Reading from the N-terminus, the 240-residue chain is 6-carboxyhexanoate--CoA ligase (240 aa).

It belongs to the BioW family. As to quaternary structure, homodimer. Mg(2+) serves as cofactor.

The catalysed reaction is heptanedioate + ATP + CoA = 6-carboxyhexanoyl-CoA + AMP + diphosphate. It functions in the pathway metabolic intermediate metabolism; pimeloyl-CoA biosynthesis; pimeloyl-CoA from pimelate: step 1/1. Catalyzes the transformation of pimelate into pimeloyl-CoA with concomitant hydrolysis of ATP to AMP. This is 6-carboxyhexanoate--CoA ligase from Aquifex aeolicus (strain VF5).